The primary structure comprises 486 residues: FAD-dependent oxidoreductase domain-containing protein 1 (486 aa).

Residues 66–82 (VVIVGGGVLGLSVAYWL) traverse the membrane as a helical segment.

In terms of assembly, associates with components of the mitochondrial respiratory chain complex I. Requires FAD as cofactor.

The protein resides in the mitochondrion inner membrane. Its function is as follows. Required for the assembly of the mitochondrial membrane respiratory chain NADH dehydrogenase (Complex I). Involved in mid-late stages of complex I assembly. The polypeptide is FAD-dependent oxidoreductase domain-containing protein 1 (FOXRED1) (Bos taurus (Bovine)).